The sequence spans 1179 residues: Integrin alpha-1 (1179 aa).

The N-terminal stretch at methionine 1–serine 28 is a signal peptide. Residues phenylalanine 29–proline 1141 are Extracellular-facing. An FG-GAP 1 repeat occupies asparagine 30 to proline 91. A disulfide bridge connects residues cysteine 82 and cysteine 92. 9 N-linked (GlcNAc...) asparagine glycosylation sites follow: asparagine 100, asparagine 105, asparagine 112, asparagine 217, asparagine 317, asparagine 341, asparagine 402, asparagine 418, and asparagine 459. The stretch at threonine 101–serine 160 is one FG-GAP 2 repeat. One can recognise a VWFA domain in the interval isoleucine 175–alanine 364. The stretch at threonine 365–histidine 417 is one FG-GAP 3 repeat. FG-GAP repeat units lie at residues glutamine 422 to valine 474, asparagine 475 to tyrosine 537, serine 556 to lysine 614, and glutamine 618 to asparagine 678. Ca(2+) contacts are provided by aspartate 497, aspartate 499, aspartate 501, and aspartate 505. An N-linked (GlcNAc...) asparagine glycan is attached at asparagine 531. The Ca(2+) site is built by aspartate 579, asparagine 581, aspartate 583, aspartate 587, aspartate 641, asparagine 643, aspartate 645, and aspartate 649. A disulfide bridge connects residues cysteine 687 and cysteine 696. Residues asparagine 698, asparagine 747, and asparagine 779 are each glycosylated (N-linked (GlcNAc...) asparagine). Cysteine 702 and cysteine 755 are oxidised to a cystine. A disulfide bond links cysteine 807 and cysteine 813. N-linked (GlcNAc...) asparagine glycans are attached at residues asparagine 839, asparagine 882, asparagine 907, asparagine 938, asparagine 965, asparagine 973, and asparagine 1007. Cysteine 877 and cysteine 885 are oxidised to a cystine. Disulfide bonds link cysteine 1029–cysteine 1062 and cysteine 1065–cysteine 1072. N-linked (GlcNAc...) asparagine glycosylation is found at asparagine 1083, asparagine 1102, and asparagine 1113. The helical transmembrane segment at leucine 1142–tryptophan 1164 threads the bilayer. Residues lysine 1165–lysine 1179 are Cytoplasmic-facing. The GFFKR motif motif lies at glycine 1167–arginine 1171.

Belongs to the integrin alpha chain family. As to quaternary structure, heterodimer of an alpha and a beta subunit. Alpha-1 associates with beta-1. Interacts with RAB21. Interacts (via cytoplasmic domain) with PTPN2; activates PTPN2 phosphatase activity towards EGFR and negatively regulates EGF signaling.

The protein resides in the membrane. Functionally, integrin alpha-1/beta-1 is a receptor for laminin and collagen. It recognizes the proline-hydroxylated sequence G-F-P-G-E-R in collagen. Involved in anchorage-dependent, negative regulation of EGF-stimulated cell growth. The sequence is that of Integrin alpha-1 (Itga1) from Mus musculus (Mouse).